The sequence spans 209 residues: 7-carboxy-7-deazaguanine synthase (209 aa).

Residues 10–12 (IQG) and R25 contribute to the substrate site. Positions 16–205 (YAGLPMLFVR…PQIHKIIYGD (190 aa)) constitute a Radical SAM core domain. [4Fe-4S] cluster contacts are provided by C29, C33, and C36. T38 lines the Mg(2+) pocket. T68 contacts substrate. S-adenosyl-L-methionine is bound at residue G70.

The protein belongs to the radical SAM superfamily. 7-carboxy-7-deazaguanine synthase family. As to quaternary structure, homodimer. Requires [4Fe-4S] cluster as cofactor. S-adenosyl-L-methionine is required as a cofactor. It depends on Mg(2+) as a cofactor.

The enzyme catalyses 6-carboxy-5,6,7,8-tetrahydropterin + H(+) = 7-carboxy-7-deazaguanine + NH4(+). It functions in the pathway purine metabolism; 7-cyano-7-deazaguanine biosynthesis. Catalyzes the complex heterocyclic radical-mediated conversion of 6-carboxy-5,6,7,8-tetrahydropterin (CPH4) to 7-carboxy-7-deazaguanine (CDG), a step common to the biosynthetic pathways of all 7-deazapurine-containing compounds. The polypeptide is 7-carboxy-7-deazaguanine synthase (Thermoplasma acidophilum (strain ATCC 25905 / DSM 1728 / JCM 9062 / NBRC 15155 / AMRC-C165)).